A 322-amino-acid chain; its full sequence is uncharacterized protein (322 aa).

Helical transmembrane passes span 24–44 (LLHL…IQIT), 68–88 (LFFE…LIFI), 100–120 (IVTS…TPTF), and 125–145 (VQLI…MPSL).

It localises to the cell membrane. This is an uncharacterized protein from Bacillus subtilis (strain 168).